A 224-amino-acid chain; its full sequence is Ribosome maturation factor RimP (224 aa).

The interval 194–224 (REGRIPGDDLGSEEAGEQSDETASGEAEDKE) is disordered. The span at 203–213 (LGSEEAGEQSD) shows a compositional bias: acidic residues.

Belongs to the RimP family.

It is found in the cytoplasm. Functionally, required for maturation of 30S ribosomal subunits. The protein is Ribosome maturation factor RimP of Brucella anthropi (strain ATCC 49188 / DSM 6882 / CCUG 24695 / JCM 21032 / LMG 3331 / NBRC 15819 / NCTC 12168 / Alc 37) (Ochrobactrum anthropi).